We begin with the raw amino-acid sequence, 60 residues long: Acrosin (60 aa).

A glycan (N-linked (GlcNAc...) asparagine) is linked at N3. The region spanning 24–60 (IIGGQDAAHGSWPWMVSLQIFTYHNNRRYHVCGGSLL) is the Peptidase S1 domain.

This sequence belongs to the peptidase S1 family. In terms of assembly, heavy chain (catalytic) and a light chain linked by two disulfide bonds. Forms a heterodimer with SERPINA5.

The enzyme catalyses Preferential cleavage: Arg-|-Xaa, Lys-|-Xaa.. With respect to regulation, inhibited by SERPINA5. Acrosin is the major protease of mammalian spermatozoa. It is a serine protease of trypsin-like cleavage specificity, it is synthesized in a zymogen form, proacrosin and stored in the acrosome. This is Acrosin (ACR) from Capra hircus (Goat).